Here is a 594-residue protein sequence, read N- to C-terminus: RING finger protein 207 (594 aa).

The segment at 25–64 (CPLCHAQYERPCLLDCFHDFCAGCLRGRTADGRVACPLCQ) adopts an RING-type zinc-finger fold. Residues 93–145 (VEAVHCANCDLDCSKQDAETACFCNTCGQPLCARCRDETHRARMFARHDIVAL) form a B box-type; atypical zinc finger. Positions 98, 101, 127, and 132 each coordinate Zn(2+). The segment at 369–400 (NTLAGGSGPKVLMGPSCPSPVRKVSRSPVQKP) is disordered. A coiled-coil region spans residues 424-458 (CRHYEDSYRGLQAEVQNLKDQVQELHRDLTKHHSL). Residues 552–594 (FQASADDESENPQTAYDASRNGETPASLLLPGSVASAEPPFVN) are disordered. Residues 562–575 (NPQTAYDASRNGET) are compositionally biased toward polar residues.

As to quaternary structure, interacts with the core-glycosylated, but not the fully glycosylated form of KCNH2/HERG. Interacts with DNAJA1 and HSPA8. Interacts (via the C-terminus) with HSPA1A; this interaction additively increases KCNH2 expression.

Its subcellular location is the cytoplasm. Functionally, plays a role in cardiac repolarization possibly by stabilizing membrane expression of the potassium channel KCNH2/HERG, or by assisting its synthesis, folding or export from the endoplasmic reticulum, in a heat shock protein-dependent manner. The protein is RING finger protein 207 (RNF207) of Oryctolagus cuniculus (Rabbit).